A 343-amino-acid polypeptide reads, in one-letter code: F-box/kelch-repeat protein At3g08810 (343 aa).

Residues methionine 1–lysine 15 show a composition bias toward basic residues. Positions methionine 1–serine 25 are disordered. The F-box domain maps to glutamine 20 to arginine 66. Kelch repeat units follow at residues aspartate 134–glycine 181, glutamine 183–serine 224, and tyrosine 225–alanine 271.

This chain is F-box/kelch-repeat protein At3g08810, found in Arabidopsis thaliana (Mouse-ear cress).